The following is a 2144-amino-acid chain: Insulin-like receptor (2144 aa).

The signal sequence occupies residues 1 to 43 (MFNMPRGVTKSKSKRGKIKMENDMAAAATTTACTLGHICVLCR). N-linked (GlcNAc...) asparagine glycosylation occurs at Asn-74. Over residues 174–199 (RRQHQQQHHHHYQHHHQQHHQQHHQR) the composition is skewed to basic residues. Positions 174 to 200 (RRQHQQQHHHHYQHHHQQHHQQHHQRQ) are disordered. A glycan (N-linked (GlcNAc...) asparagine) is linked at Asn-203. The interval 229–256 (NYKQQQQLQHNQQLPRATPQQKQQEKDR) is disordered. Residues 232-242 (QQQQLQHNQQL) show a composition bias toward low complexity. N-linked (GlcNAc...) asparagine glycans are attached at residues Asn-265, Asn-356, Asn-376, Asn-406, Asn-468, and Asn-509. 8 disulfides stabilise this stretch: Cys-531-Cys-539, Cys-535-Cys-545, Cys-546-Cys-554, Cys-550-Cys-564, Cys-567-Cys-576, Cys-580-Cys-591, Cys-597-Cys-618, and Cys-635-Cys-638. One copy of the FU repeat lies at 542 to 586 (EHTCCSQDCLGGCVIDKNGNESCISCRNVSFNNICMDSCPKGYYQ). 2 N-linked (GlcNAc...) asparagine glycosylation sites follow: Asn-561 and Asn-569. N-linked (GlcNAc...) asparagine glycosylation is found at Asn-751, Asn-810, Asn-824, Asn-839, Asn-864, Asn-898, Asn-946, Asn-1053, Asn-1147, Asn-1218, and Asn-1265. 2 consecutive Fibronectin type-III domains span residues 825–927 (VTTK…TNPG) and 928–1026 (RPSK…EYDD). The interval 1053-1084 (NGSSDKSDGAEGAALDSNAIPNGGATNPSRRR) is disordered. The 96-residue stretch at 1210–1305 (LKVDLEHANN…EVEHIKVEPP (96 aa)) folds into the Fibronectin type-III 3 domain. The helical transmembrane segment at 1311–1331 (VFFWLLGIGLAFLIVSLFGYV) threads the bilayer. Residues 1332-2144 (CYLHKRKVPS…PPNGFIGREA (813 aa)) are Cytoplasmic-facing. Positions 1351–1354 (NPFY) are chico-binding. Phosphotyrosine; by autocatalysis is present on Tyr-1354. The Protein kinase domain occupies 1371–1659 (IIQLAPLGQG…LEPQCPNSQF (289 aa)). ATP-binding positions include 1377-1385 (LGQGSFGMV) and Lys-1405. Asp-1519 acts as the Proton acceptor in catalysis. A phosphotyrosine; by autocatalysis mark is found at Tyr-1545, Tyr-1549, and Tyr-1550. 4 disordered regions span residues 1690-1724 (VPLD…DQPP), 1788-1871 (RGYE…KKTV), 1886-1962 (LFNH…ISDN), and 2020-2144 (ISHN…GREA). A Phosphoserine modification is found at Ser-1816. Composition is skewed to low complexity over residues 1849 to 1860 (STASAGSSNASS) and 1894 to 1916 (SNAS…NLTS). Positions 2042 to 2062 (SDEDNEQEEDDEDEDDDVDDE) are enriched in acidic residues. Positions 2063–2073 (HVEHIKMERMP) are enriched in basic and acidic residues. Polar residues predominate over residues 2084–2120 (SKTQPPRSRSVSQTRKSPTNPNSGIGATGAGNRSNLL).

The protein belongs to the protein kinase superfamily. Tyr protein kinase family. Insulin receptor subfamily. In terms of assembly, tetramer of 2 alpha and 2 beta chains linked by disulfide bonds. The alpha chains contribute to the formation of the ligand-binding domain, while the beta chains carry the kinase domain. Interacts (via C-terminal cytoplasmic region) with dock/dreadlocks (via SH2 and SH3 domains); when autophosphorylated. May interact (via beta subunit) with chico/IRS-1; this interaction may lead to tyrosine phosphorylation of the insulin receptor substrate chico. Interacts with Elp6; the interaction may stabilize Elp6. Mn(2+) is required as a cofactor. In terms of processing, the 280 kDa proreceptor is proteolytically processed to form a 120 kDa alpha subunit and a 170 kDa beta subunit. The beta subunit undergoes cell-specific cleavage to generate a 90 kDa beta subunit and a free 60 kDa C-terminal subunit. Both the 90 kDa and the 170 kDa beta subunits can assemble with the alpha subunits to form mature receptors. Autophosphorylated on tyrosine residues, including Tyr-1549 and Tyr-1550, in response to exogenous insulin. Tyr-1549 and Tyr-1550 are dephosphorylated by Ptp61F recruited by the dock/dreadlocks adapter protein. Post-translationally, phosphorylation of Tyr-1354 is required for Chico-binding.

It is found in the membrane. The protein localises to the cell projection. It localises to the axon. The protein resides in the growth cone membrane. It catalyses the reaction L-tyrosyl-[protein] + ATP = O-phospho-L-tyrosyl-[protein] + ADP + H(+). Its activity is regulated as follows. Activated in response to insulin. Autophosphorylation activates the kinase activity. Has a ligand-stimulated tyrosine-protein kinase activity. Binds 3 insulin-like peptide ligands. Regulates cell number and cell size during development by regulating cell growth and survival, affecting body size and organ size, including ovaries and imaginal disks. Plays a role in life-span determination. May be involved in regulation of other neuroendocrine signaling pathways. Involved in the development of the embryonic nervous system. Functions upstream of dock/dreadlocks for photoreceptor (R cell) axon guidance and targeting in the visual system. Involved in the acs mediated recovery of gut enterocytes following the cytoplasmic purge response to intestinal bacterial infection. This chain is Insulin-like receptor, found in Drosophila melanogaster (Fruit fly).